The following is a 718-amino-acid chain: Putative proline-rich receptor-like protein kinase PERK11 (718 aa).

Residues 1 to 256 (MDKVQQQADL…GGTSQQSNES (256 aa)) form a disordered region. The Extracellular portion of the chain corresponds to 1–262 (MDKVQQQADL…SNESNYTEKT (262 aa)). Pro residues-rich tracts occupy residues 45 to 105 (ATSP…PPQS), 115 to 132 (IPFPKPQLPPPSLFPPPS), and 157 to 167 (LPSPPSTPFSP). Composition is skewed to low complexity over residues 168–203 (PSQENSGSQGSPPLSSLLPPMLPLNPNSPGNPLQPL) and 211–244 (SNRVPSSSSSPSPPSLSGSNNHSGGSNRHNANSN). N-linked (GlcNAc...) asparagine glycosylation is found at N231, N254, and N257. The chain crosses the membrane as a helical span at residues 263 to 283 (VIGIGIAGVLVILFIAGVFFV). Topologically, residues 284–718 (RRKQKKGSSS…RAFNTSHRNH (435 aa)) are cytoplasmic. The segment at 314–348 (HYRQKPGNGNSSAQNSSPDTNSLGNPKHGRGTPDS) is disordered. Over residues 320 to 337 (GNGNSSAQNSSPDTNSLG) the composition is skewed to polar residues. The residue at position 359 (T359) is a Phosphothreonine. Residues 370–649 (FCKSFVVGEG…VRALDTRDDL (280 aa)) enclose the Protein kinase domain. ATP is bound by residues 376–384 (VGEGGFGCV) and K398. Y443 carries the post-translational modification Phosphotyrosine. Catalysis depends on D494, which acts as the Proton acceptor. 2 positions are modified to phosphoserine: S498 and S527. 2 positions are modified to phosphothreonine: T528 and T533. Y541 carries the phosphotyrosine modification. Positions 683 to 718 (SSDLGTNTGYYPSQDYATSHEYESESRAFNTSHRNH) are disordered. Polar residues-rich tracts occupy residues 685–699 (DLGTNTGYYPSQDYA) and 709–718 (RAFNTSHRNH).

The protein belongs to the protein kinase superfamily. Ser/Thr protein kinase family. Mostly expressed in flower buds.

The protein resides in the cell membrane. The enzyme catalyses L-seryl-[protein] + ATP = O-phospho-L-seryl-[protein] + ADP + H(+). The catalysed reaction is L-threonyl-[protein] + ATP = O-phospho-L-threonyl-[protein] + ADP + H(+). The polypeptide is Putative proline-rich receptor-like protein kinase PERK11 (PERK11) (Arabidopsis thaliana (Mouse-ear cress)).